Here is an 88-residue protein sequence, read N- to C-terminus: NADH-ubiquinone oxidoreductase chain 4L (88 aa).

Transmembrane regions (helical) follow at residues I22–V42 and I57–Y77.

This sequence belongs to the complex I subunit 4L family.

Its subcellular location is the mitochondrion membrane. The catalysed reaction is a ubiquinone + NADH + 5 H(+)(in) = a ubiquinol + NAD(+) + 4 H(+)(out). Core subunit of the mitochondrial membrane respiratory chain NADH dehydrogenase (Complex I) that is believed to belong to the minimal assembly required for catalysis. Complex I functions in the transfer of electrons from NADH to the respiratory chain. The immediate electron acceptor for the enzyme is believed to be ubiquinone. The protein is NADH-ubiquinone oxidoreductase chain 4L (ND4L) of Trimorphomyces papilionaceus (Jelly fungus).